The chain runs to 184 residues: Oligoribonuclease (184 aa).

The region spanning 7 to 170 is the Exonuclease domain; that stretch reads LIWIDLEMTG…DDIYESIEEL (164 aa). Tyrosine 128 is an active-site residue.

It belongs to the oligoribonuclease family.

The protein resides in the cytoplasm. 3'-to-5' exoribonuclease specific for small oligoribonucleotides. The polypeptide is Oligoribonuclease (Hydrogenovibrio crunogenus (strain DSM 25203 / XCL-2) (Thiomicrospira crunogena)).